Reading from the N-terminus, the 334-residue chain is uncharacterized protein (334 aa).

Ser126 provides a ligand contact to substrate. Residue Tyr151 is the Proton acceptor of the active site.

This sequence belongs to the NAD(P)-dependent epimerase/dehydratase family. dTDP-glucose dehydratase subfamily.

This is an uncharacterized protein from Escherichia coli O111:H-.